Here is a 364-residue protein sequence, read N- to C-terminus: Dual-specificity RNA methyltransferase RlmN (364 aa).

The Proton acceptor role is filled by glutamate 93. A Radical SAM core domain is found at glutamate 99–aspartate 337. Cysteines 106 and 342 form a disulfide. The [4Fe-4S] cluster site is built by cysteine 113, cysteine 117, and cysteine 120. Residues glycine 167–glutamate 168, serine 199, serine 221–histidine 223, and asparagine 299 contribute to the S-adenosyl-L-methionine site. Cysteine 342 acts as the S-methylcysteine intermediate in catalysis.

This sequence belongs to the radical SAM superfamily. RlmN family. [4Fe-4S] cluster is required as a cofactor.

It is found in the cytoplasm. The catalysed reaction is adenosine(2503) in 23S rRNA + 2 reduced [2Fe-2S]-[ferredoxin] + 2 S-adenosyl-L-methionine = 2-methyladenosine(2503) in 23S rRNA + 5'-deoxyadenosine + L-methionine + 2 oxidized [2Fe-2S]-[ferredoxin] + S-adenosyl-L-homocysteine. It carries out the reaction adenosine(37) in tRNA + 2 reduced [2Fe-2S]-[ferredoxin] + 2 S-adenosyl-L-methionine = 2-methyladenosine(37) in tRNA + 5'-deoxyadenosine + L-methionine + 2 oxidized [2Fe-2S]-[ferredoxin] + S-adenosyl-L-homocysteine. Functionally, specifically methylates position 2 of adenine 2503 in 23S rRNA and position 2 of adenine 37 in tRNAs. m2A2503 modification seems to play a crucial role in the proofreading step occurring at the peptidyl transferase center and thus would serve to optimize ribosomal fidelity. In Dichelobacter nodosus (strain VCS1703A), this protein is Dual-specificity RNA methyltransferase RlmN.